Reading from the N-terminus, the 380-residue chain is Cytochrome b (380 aa).

The next 4 membrane-spanning stretches (helical) occupy residues 34-54 (FGSL…LLAM), 78-99 (WLIR…FLHI), 114-134 (WNTG…GYVL), and 179-199 (FFAL…IHLT). His-84 and His-98 together coordinate heme b. Residues His-183 and His-197 each contribute to the heme b site. Residue His-202 participates in a ubiquinone binding. 4 helical membrane-spanning segments follow: residues 227–247 (IKDI…TLFS), 289–309 (LGGV…PFLH), 321–341 (LSQT…WIGS), and 348–368 (FIII…ILFP).

It belongs to the cytochrome b family. As to quaternary structure, the cytochrome bc1 complex contains 11 subunits: 3 respiratory subunits (MT-CYB, CYC1 and UQCRFS1), 2 core proteins (UQCRC1 and UQCRC2) and 6 low-molecular weight proteins (UQCRH/QCR6, UQCRB/QCR7, UQCRQ/QCR8, UQCR10/QCR9, UQCR11/QCR10 and a cleavage product of UQCRFS1). This cytochrome bc1 complex then forms a dimer. Requires heme b as cofactor.

The protein localises to the mitochondrion inner membrane. Functionally, component of the ubiquinol-cytochrome c reductase complex (complex III or cytochrome b-c1 complex) that is part of the mitochondrial respiratory chain. The b-c1 complex mediates electron transfer from ubiquinol to cytochrome c. Contributes to the generation of a proton gradient across the mitochondrial membrane that is then used for ATP synthesis. The sequence is that of Cytochrome b (MT-CYB) from Alectoris graeca (Rock partridge).